Here is a 326-residue protein sequence, read N- to C-terminus: HTH-type transcriptional regulator BlaA (326 aa).

One can recognise an HTH lysR-type domain in the interval 1–59; sequence MDVVNACRAFVKVSERGSFTVGAAAAQMSQSVASRRVAALEKHFGERLFDRASRRPSLT. Residues 19 to 38 constitute a DNA-binding region (H-T-H motif); the sequence is FTVGAAAAQMSQSVASRRVA. The segment at 289–326 is disordered; sequence TADHGPDPATGAGPGADAGTEPGARAEPGAPEEGAQAC. The span at 295-326 shows a compositional bias: low complexity; that stretch reads DPATGAGPGADAGTEPGARAEPGAPEEGAQAC.

This sequence belongs to the LysR transcriptional regulatory family.

Positive regulator of the expression of the gene (blaB) for beta-lactamase. It binds to the blaL-blaA intercistronic region. The polypeptide is HTH-type transcriptional regulator BlaA (blaA) (Streptomyces cacaoi).